The sequence spans 438 residues: sn-glycerol-3-phosphate-binding periplasmic protein UgpB (438 aa).

The signal sequence occupies residues 1–23 (MKPLHYTASALALGLALMGNAQA). Y65, E89, S144, S270, G307, Y346, and R397 together coordinate sn-glycerol 3-phosphate.

The protein belongs to the bacterial solute-binding protein 1 family. As to quaternary structure, the complex is composed of two ATP-binding proteins (UgpC), two transmembrane proteins (UgpA and UgpE) and a solute-binding protein (UgpB).

Its subcellular location is the periplasm. Part of the ABC transporter complex UgpBAEC involved in sn-glycerol-3-phosphate (G3P) import. Binds G3P. This Shigella flexneri protein is sn-glycerol-3-phosphate-binding periplasmic protein UgpB (ugpB).